The primary structure comprises 213 residues: Imidazole glycerol phosphate synthase subunit HisH (213 aa).

The region spanning 4–211 (NLGVIDYGMG…LHWLHQGAEP (208 aa)) is the Glutamine amidotransferase type-1 domain. The Nucleophile role is filled by C82. Active-site residues include H186 and E188.

As to quaternary structure, heterodimer of HisH and HisF.

Its subcellular location is the cytoplasm. The catalysed reaction is 5-[(5-phospho-1-deoxy-D-ribulos-1-ylimino)methylamino]-1-(5-phospho-beta-D-ribosyl)imidazole-4-carboxamide + L-glutamine = D-erythro-1-(imidazol-4-yl)glycerol 3-phosphate + 5-amino-1-(5-phospho-beta-D-ribosyl)imidazole-4-carboxamide + L-glutamate + H(+). It catalyses the reaction L-glutamine + H2O = L-glutamate + NH4(+). It functions in the pathway amino-acid biosynthesis; L-histidine biosynthesis; L-histidine from 5-phospho-alpha-D-ribose 1-diphosphate: step 5/9. Its function is as follows. IGPS catalyzes the conversion of PRFAR and glutamine to IGP, AICAR and glutamate. The HisH subunit catalyzes the hydrolysis of glutamine to glutamate and ammonia as part of the synthesis of IGP and AICAR. The resulting ammonia molecule is channeled to the active site of HisF. This Synechococcus sp. (strain CC9902) protein is Imidazole glycerol phosphate synthase subunit HisH.